A 504-amino-acid polypeptide reads, in one-letter code: Putative BTB/POZ domain-containing protein R842 (504 aa).

The BTB domain occupies 21-91 (SDVKLILKDN…FYGFKSPSVT (71 aa)).

Belongs to the mimivirus BTB/WD family.

This is Putative BTB/POZ domain-containing protein R842 from Acanthamoeba polyphaga (Amoeba).